The sequence spans 104 residues: uncharacterized protein (104 aa).

To M.jannaschii MJ1511.

This is an uncharacterized protein from Methanocaldococcus jannaschii (strain ATCC 43067 / DSM 2661 / JAL-1 / JCM 10045 / NBRC 100440) (Methanococcus jannaschii).